The sequence spans 1281 residues: Zinc finger transcription factor Trps1 (1281 aa).

Disordered regions lie at residues 1–101 (MVRK…VSFP) and 116–204 (PAAG…KGDL). 2 stretches are compositionally biased toward polar residues: residues 21 to 31 (LEPTATESKVS) and 40 to 49 (DQMSENTDQS). Residue Lys29 forms a Glycyl lysine isopeptide (Lys-Gly) (interchain with G-Cter in SUMO2) linkage. Residues Ser90 and Ser127 each carry the phosphoserine modification. Over residues 148–162 (LETKEEHKMSPKATE) the composition is skewed to basic and acidic residues. Over residues 166 to 189 (PVQSGQANCQGLSPVSVASKNPQV) the composition is skewed to polar residues. A phosphoserine mark is found at Ser178 and Ser216. The C2H2-type 1; atypical zinc-finger motif lies at 222-247 (FKCNICGYGYYGNDPTDLIKHFRKYH). A Glycyl lysine isopeptide (Lys-Gly) (interchain with G-Cter in SUMO2) cross-link involves residue Lys263. A C2H2-type 2; atypical zinc finger spans residues 333 to 358 (FRCKFCNFTYMGNSSTELEQHFLQTH). Residues 365-393 (SLPSSEGVKPSEKNSNKSIPALRASDSGD) are disordered. Residues Lys418, Lys457, Lys474, and Lys488 each participate in a glycyl lysine isopeptide (Lys-Gly) (interchain with G-Cter in SUMO2) cross-link. The disordered stretch occupies residues 484–515 (NDLAKSVEGEPLTKPEKGLSGAKKKDFPSKGA). A compositionally biased stretch (basic and acidic residues) spans 488-515 (KSVEGEPLTKPEKGLSGAKKKDFPSKGA). A C2H2-type 3; atypical zinc finger spans residues 614–637 (HQCHQCSFSTPDVDVLLFHYETVH). The mediates interaction with GLI3 stretch occupies residues 635 to 819 (TVHESQASDV…SLGLLTPVSS (185 aa)). Lys645 is covalently cross-linked (Glycyl lysine isopeptide (Lys-Gly) (interchain with G-Cter in SUMO2)). 2 consecutive C2H2-type zinc fingers follow at residues 666 to 689 (HSCT…RRAH) and 692 to 715 (YKCR…NTVH). Residues Lys737 and Lys755 each participate in a glycyl lysine isopeptide (Lys-Gly) (interchain with G-Cter in SUMO2) cross-link. Lys766 is covalently cross-linked (Glycyl lysine isopeptide (Lys-Gly) (interchain with G-Cter in SUMO1); alternate). A Glycyl lysine isopeptide (Lys-Gly) (interchain with G-Cter in SUMO2); alternate cross-link involves residue Lys766. Glycyl lysine isopeptide (Lys-Gly) (interchain with G-Cter in SUMO2) cross-links involve residues Lys825 and Lys850. Positions 856–885 (APAGSEKSASLTQQYPASGESKTKDESQSL) are disordered. Over residues 862 to 871 (KSASLTQQYP) the composition is skewed to polar residues. Glycyl lysine isopeptide (Lys-Gly) (interchain with G-Cter in SUMO2) cross-links involve residues Lys877 and Lys879. The segment at 896–920 (CANCLTTKTSLWRKNANGGYVCNAC) adopts a GATA-type zinc-finger fold. Glycyl lysine isopeptide (Lys-Gly) (interchain with G-Cter in SUMO2) cross-links involve residues Lys925, Lys937, and Lys965. Residues 961 to 977 (EQLNKQQRGSGEEQVNG) are compositionally biased toward polar residues. The interval 961–1000 (EQLNKQQRGSGEEQVNGSPLERRSEDHLSESHPREIPLPS) is disordered. Ser978 carries the post-translational modification Phosphoserine. Residues 980–995 (LERRSEDHLSESHPRE) are compositionally biased toward basic and acidic residues. Positions 985–1184 (EDHLSESHPR…PTANGASKEK (200 aa)) are mediates interaction with RNF4. Residues Lys1003, Lys1012, Lys1030, and Lys1040 each participate in a glycyl lysine isopeptide (Lys-Gly) (interchain with G-Cter in SUMO2) cross-link. The span at 1040–1049 (KSPQESTGDP) shows a compositional bias: polar residues. The interval 1040–1078 (KSPQESTGDPGNSSSVSDGKGSSERGSPIEKYMRPAKHP) is disordered. Ser1041 is modified (phosphoserine). Low complexity predominate over residues 1050 to 1059 (GNSSSVSDGK). Residues 1060 to 1072 (GSSERGSPIEKYM) show a composition bias toward basic and acidic residues. Phosphoserine is present on Ser1066. Lys1070 is covalently cross-linked (Glycyl lysine isopeptide (Lys-Gly) (interchain with G-Cter in SUMO2)). Ser1085 is modified (phosphoserine). The segment at 1163-1281 (PLDLAIKHSR…QAEKNGKPKE (119 aa)) is transcriptional repressor domain. Residues 1169–1195 (KHSRPGPTANGASKEKTKAPPTVKNED) are disordered. Residues Lys1192 and Lys1201 each participate in a glycyl lysine isopeptide (Lys-Gly) (interchain with G-Cter in SUMO2); alternate cross-link. Residues Lys1192 and Lys1201 each participate in a glycyl lysine isopeptide (Lys-Gly) (interchain with G-Cter in SUMO); alternate cross-link. Residue Lys1201 forms a Glycyl lysine isopeptide (Lys-Gly) (interchain with G-Cter in SUMO1); alternate linkage. 2 C2H2-type zinc fingers span residues 1215–1237 (TKCV…MSCH) and 1243–1267 (FQCS…RGLH).

As to quaternary structure, interacts with RNF4; regulates TRPS1 repressor activity. Interacts specifically with the activator form of GLI3 (GLI3A) but not with the repressor form (GLI3R). Post-translationally, sumoylated. Sumoylation in the repressor domain inhibits the transcription repression activity. Sumoylation on Lys-1201 is the major site. Appears to be sumoylated on multiple sites. As to expression, in the embryo, expression is detected in both visceral and skeletal tissues. Found in the maxilla, mandible, snout, prospective phalanges and in the femoral head within the developing hip. Also expressed in the hair follicles.

The protein localises to the nucleus. Transcriptional repressor. Binds specifically to GATA sequences and represses expression of GATA-regulated genes at selected sites and stages in vertebrate development. Regulates chondrocyte proliferation and differentiation. Executes multiple functions in proliferating chondrocytes, expanding the region of distal chondrocytes, activating proliferation in columnar cells and supporting the differentiation of columnar into hypertrophic chondrocytes. This Mus musculus (Mouse) protein is Zinc finger transcription factor Trps1 (Trps1).